The sequence spans 155 residues: Small ribosomal subunit protein uS7c (155 aa).

This sequence belongs to the universal ribosomal protein uS7 family. As to quaternary structure, part of the 30S ribosomal subunit.

It is found in the plastid. The protein localises to the chloroplast. Functionally, one of the primary rRNA binding proteins, it binds directly to 16S rRNA where it nucleates assembly of the head domain of the 30S subunit. The protein is Small ribosomal subunit protein uS7c (rps7) of Lactoris fernandeziana.